Reading from the N-terminus, the 327-residue chain is uncharacterized protein (327 aa).

A helical membrane pass occupies residues 266-285 (IGLLAAGSVALTSLCHLLCY). The disordered stretch occupies residues 297 to 327 (EEENEAAEETAAGEASAVAAAAVSEEEQQRE). Over residues 305 to 319 (ETAAGEASAVAAAAV) the composition is skewed to low complexity.

The protein belongs to the HHV-5 UL14 protein family.

The protein resides in the host membrane. This is an uncharacterized protein from Human cytomegalovirus (strain Merlin) (HHV-5).